Here is a 1168-residue protein sequence, read N- to C-terminus: Zinc finger CCHC domain-containing protein 2 (1168 aa).

Disordered stretches follow at residues 1–87, 209–242, 561–693, and 932–978; these read MLRM…GGHA, EGSR…CAKL, KRSL…LGTE, and ATSA…SDST. The segment covering 43-66 has biased composition (pro residues); the sequence is PPPPPPTGLPRGPPPPPPSPPRGL. The segment covering 67–78 has biased composition (low complexity); sequence EPPVASGPTAGA. The segment covering 216–227 has biased composition (acidic residues); sequence EDEPGGDDEQDA. A compositionally biased stretch (gly residues) spans 233–242; that stretch reads GPEGGGCAKL. Basic and acidic residues predominate over residues 574-588; the sequence is PQVEKEKIKKTENRL. Low complexity predominate over residues 626-635; it reads SSESYSSPSS. Residues 636–655 show a composition bias toward basic and acidic residues; it reads PRHDGRESLESEEEKDRDTD. Polar residues predominate over residues 932–949; the sequence is ATSAQPASTGISPAQSTV. Residues 951–965 show a composition bias toward pro residues; it reads PAVPTHTPGPAPSPS. The segment covering 966 to 978 has biased composition (polar residues); it reads PALTHSTAQSDST. A CCHC-type zinc finger spans residues 1121–1138; that stretch reads VSCYNCGVSGHYAQDCKQ.

In Rattus norvegicus (Rat), this protein is Zinc finger CCHC domain-containing protein 2 (Zcchc2).